Reading from the N-terminus, the 184-residue chain is Large ribosomal subunit protein uL15 (184 aa).

The segment at 1-55 is disordered; that stretch reads MDLSSLSPAKGSVKNKKRVGRGQGSGNGTTAGKGNKGQQSRSGYKRPVSEGGQMP. The span at 21-35 shows a compositional bias: gly residues; sequence RGQGSGNGTTAGKGN.

The protein belongs to the universal ribosomal protein uL15 family. In terms of assembly, part of the 50S ribosomal subunit.

In terms of biological role, binds to the 23S rRNA. This is Large ribosomal subunit protein uL15 from Prosthecochloris aestuarii (strain DSM 271 / SK 413).